An 818-amino-acid chain; its full sequence is Serine/threonine-protein kinase PTK2/STK2 (818 aa).

Residues 28-39 (NSSSHTDNSSLL) show a composition bias toward polar residues. 2 disordered regions span residues 28-100 (NSSS…GSVS) and 117-177 (NPYL…SHHF). Threonine 56 bears the Phosphothreonine mark. Over residues 57–81 (SPSISGSGSGGNSPSSSAGARQRSA) the composition is skewed to low complexity. 2 positions are modified to phosphoserine: serine 59 and serine 80. A compositionally biased stretch (basic and acidic residues) spans 136–160 (TRDRDRAVLDREKEKERARNKERNT). One can recognise a Protein kinase domain in the interval 255–562 (DTDNKPIGSG…MDDLFNDPFF (308 aa)). ATP-binding positions include 261–269 (IGSGGSSEV) and lysine 285. Aspartate 388 (proton acceptor) is an active-site residue. Positions 585–595 (STSTNDFSENS) are enriched in polar residues. Residues 585 to 795 (STSTNDFSEN…SVSSSKKKKV (211 aa)) form a disordered region. Phosphoserine is present on residues serine 623 and serine 632. Basic and acidic residues-rich tracts occupy residues 638–651 (KVKD…HDVG) and 659–685 (TKPK…KVIE). Serine 694 bears the Phosphoserine mark. Threonine 700 is modified (phosphothreonine). Serine 711 carries the phosphoserine modification. Residues 727 to 736 (TPTTPTHNGP) show a composition bias toward low complexity. Threonine 737 is subject to Phosphothreonine. Residues serine 752, serine 755, serine 778, and serine 781 each carry the phosphoserine modification. Positions 755 to 767 (SLKSETPASTKNF) are enriched in polar residues. Low complexity predominate over residues 768-789 (SAPNVSSSSNSLRSLGSPSVSS).

The protein belongs to the protein kinase superfamily. Ser/Thr protein kinase family.

The protein localises to the nucleus. The protein resides in the cytoplasm. The catalysed reaction is L-seryl-[protein] + ATP = O-phospho-L-seryl-[protein] + ADP + H(+). The enzyme catalyses L-threonyl-[protein] + ATP = O-phospho-L-threonyl-[protein] + ADP + H(+). Essential determinant for high-affinity spermidine transport. Required for the activation of the plasma membrane proton pump PMA1 via phosphorylation of 'Ser-899'. The chain is Serine/threonine-protein kinase PTK2/STK2 (PTK2) from Saccharomyces cerevisiae (strain ATCC 204508 / S288c) (Baker's yeast).